Here is a 985-residue protein sequence, read N- to C-terminus: Alpha-glucosidase (985 aa).

An N-terminal signal peptide occupies residues 1–25; sequence MAGLKSFLASSWLLPVACGASQSIV. N-linked (GlcNAc...) asparagine glycans are attached at residues Asn126, Asn145, Asn220, Asn255, Asn349, and Asn424. The active-site Nucleophile is the Asp492. Glu495 is an active-site residue. Asn508, Asn536, Asn539, Asn602, and Asn624 each carry an N-linked (GlcNAc...) asparagine glycan. Asp660 (proton donor) is an active-site residue. N-linked (GlcNAc...) asparagine glycosylation is found at Asn661, Asn835, Asn881, Asn929, and Asn957.

This sequence belongs to the glycosyl hydrolase 31 family.

It carries out the reaction Hydrolysis of terminal, non-reducing (1-&gt;4)-linked alpha-D-glucose residues with release of alpha-D-glucose.. Its function is as follows. Hydrolyzes malto-oligosaccharides, but has a low activity toward soluble starch. The polypeptide is Alpha-glucosidase (agdA) (Aspergillus oryzae (strain ATCC 42149 / RIB 40) (Yellow koji mold)).